The chain runs to 142 residues: Coiled-coil-helix-coiled-coil-helix domain-containing protein 10, mitochondrial (142 aa).

A mitochondrion-targeting transit peptide spans 1–16 (MPRGSRSAASRPASRP). Positions 1 to 20 (MPRGSRSAASRPASRPAAPS) are enriched in low complexity. 2 disordered regions span residues 1–45 (MPRG…PGLM) and 68–97 (ALTGAFSGGSSEPSQPAVQQAPTPAAPQPL). Residues 21–39 (AHPPAHPPPSAAAPAPAPS) are compositionally biased toward pro residues. Residues 80 to 90 (PSQPAVQQAPT) are compositionally biased toward low complexity. The region spanning 99–140 (MGPCAYEIRQFLDCSTTQSDLSLCEGFSEALKQCKYYHGLSS) is the CHCH domain. 2 short sequence motifs (cx9C motif) span residues 102-112 (CAYEIRQFLDC) and 122-132 (CEGFSEALKQC). 2 disulfides stabilise this stretch: C102-C132 and C112-C122.

As to expression, ubiquitously expressed. Higher expression is observed in heart and liver.

It localises to the mitochondrion intermembrane space. Its function is as follows. May be involved in the maintenance of mitochondrial organization and mitochondrial cristae structure. The sequence is that of Coiled-coil-helix-coiled-coil-helix domain-containing protein 10, mitochondrial (CHCHD10) from Homo sapiens (Human).